We begin with the raw amino-acid sequence, 186 residues long: Holliday junction branch migration complex subunit RuvA (186 aa).

The interval 1–61 (MYRYIKGIVT…EDIFQLYGFK (61 aa)) is domain I. The interval 62 to 134 (DEETLNLFLK…LKGKLVNDEL (73 aa)) is domain II. Residues 134–137 (LDMQ) are flexible linker. Residues 138–186 (LLSDNSKDVAAALEALGYNKKEIAKSLKHVNFDQDLNKALKEALAILLK) form a domain III region.

The protein belongs to the RuvA family. Homotetramer. Forms an RuvA(8)-RuvB(12)-Holliday junction (HJ) complex. HJ DNA is sandwiched between 2 RuvA tetramers; dsDNA enters through RuvA and exits via RuvB. An RuvB hexamer assembles on each DNA strand where it exits the tetramer. Each RuvB hexamer is contacted by two RuvA subunits (via domain III) on 2 adjacent RuvB subunits; this complex drives branch migration. In the full resolvosome a probable DNA-RuvA(4)-RuvB(12)-RuvC(2) complex forms which resolves the HJ.

Its subcellular location is the cytoplasm. The RuvA-RuvB-RuvC complex processes Holliday junction (HJ) DNA during genetic recombination and DNA repair, while the RuvA-RuvB complex plays an important role in the rescue of blocked DNA replication forks via replication fork reversal (RFR). RuvA specifically binds to HJ cruciform DNA, conferring on it an open structure. The RuvB hexamer acts as an ATP-dependent pump, pulling dsDNA into and through the RuvAB complex. HJ branch migration allows RuvC to scan DNA until it finds its consensus sequence, where it cleaves and resolves the cruciform DNA. This Acholeplasma laidlawii (strain PG-8A) protein is Holliday junction branch migration complex subunit RuvA.